We begin with the raw amino-acid sequence, 104 residues long: L-rhamnose mutarotase (104 aa).

Y18 provides a ligand contact to substrate. H22 (proton donor) is an active-site residue. Substrate-binding positions include Y41 and W76 to W77.

Belongs to the rhamnose mutarotase family. Homodimer.

Its subcellular location is the cytoplasm. It carries out the reaction alpha-L-rhamnose = beta-L-rhamnose. It participates in carbohydrate metabolism; L-rhamnose metabolism. Its function is as follows. Involved in the anomeric conversion of L-rhamnose. This chain is L-rhamnose mutarotase, found in Escherichia coli (strain K12 / MC4100 / BW2952).